Consider the following 319-residue polypeptide: Ornithine carbamoyltransferase (319 aa).

Carbamoyl phosphate contacts are provided by residues 55-58 (STRT), Q82, R106, and 133-136 (HPCQ). L-ornithine-binding positions include N171, D234, and 238–239 (SM). Residues 274-275 (CL) and R302 contribute to the carbamoyl phosphate site.

This sequence belongs to the aspartate/ornithine carbamoyltransferase superfamily. OTCase family.

Its subcellular location is the cytoplasm. It carries out the reaction carbamoyl phosphate + L-ornithine = L-citrulline + phosphate + H(+). It participates in amino-acid biosynthesis; L-arginine biosynthesis; L-arginine from L-ornithine and carbamoyl phosphate: step 1/3. Its function is as follows. Reversibly catalyzes the transfer of the carbamoyl group from carbamoyl phosphate (CP) to the N(epsilon) atom of ornithine (ORN) to produce L-citrulline. In Corynebacterium glutamicum (strain ATCC 13032 / DSM 20300 / JCM 1318 / BCRC 11384 / CCUG 27702 / LMG 3730 / NBRC 12168 / NCIMB 10025 / NRRL B-2784 / 534), this protein is Ornithine carbamoyltransferase (argF).